We begin with the raw amino-acid sequence, 250 residues long: uncharacterized protein (250 aa).

The N-terminal stretch at 1–17 is a signal peptide; it reads MRTLVLLSSVAILSTLA. Residues Asn48, Asn159, Asn223, and Asn239 are each glycosylated (N-linked (GlcNAc...) asparagine).

The protein resides in the secreted. This is an uncharacterized protein from Caenorhabditis elegans.